An 864-amino-acid chain; its full sequence is Leucine--tRNA ligase (864 aa).

Positions P42–H52 match the 'HIGH' region motif. A 'KMSKS' region motif is present at residues K624–S628. K627 serves as a coordination point for ATP.

Belongs to the class-I aminoacyl-tRNA synthetase family.

Its subcellular location is the cytoplasm. It catalyses the reaction tRNA(Leu) + L-leucine + ATP = L-leucyl-tRNA(Leu) + AMP + diphosphate. The sequence is that of Leucine--tRNA ligase from Burkholderia mallei (strain ATCC 23344).